A 355-amino-acid polypeptide reads, in one-letter code: Protein RecA (355 aa).

67–74 serves as a coordination point for ATP; it reads GPESSGKT. Residues 335–355 are disordered; it reads NSLVSDVESEDEGASESNEEF. Residues 341-355 show a composition bias toward acidic residues; sequence VESEDEGASESNEEF.

The protein belongs to the RecA family.

It localises to the cytoplasm. Its function is as follows. Can catalyze the hydrolysis of ATP in the presence of single-stranded DNA, the ATP-dependent uptake of single-stranded DNA by duplex DNA, and the ATP-dependent hybridization of homologous single-stranded DNAs. It interacts with LexA causing its activation and leading to its autocatalytic cleavage. This Sodalis glossinidius protein is Protein RecA.